Reading from the N-terminus, the 301-residue chain is Heme A synthase (301 aa).

Over 1–7 (MHKGLKR) the chain is Cytoplasmic. A helical membrane pass occupies residues 8–28 (LGVITSLGVLLVLIQGALVTN). The Extracellular portion of the chain corresponds to 29–56 (TGSGEGCGQTWPLCFGQVIPLDPPPETV). Cys35 and Cys42 are disulfide-bonded. The chain crosses the membrane as a helical span at residues 57–77 (IEFSHRLVAGIVGMLVILMAI). Glu58 is a catalytic residue. His61 contributes to the heme o binding site. At 78–92 (WSWRRLKHMPETRFL) the chain is on the cytoplasmic side. The helical transmembrane segment at 93-113 (AVISVFMIIFQGLLGAGAVVF) threads the bilayer. Topologically, residues 114–117 (GQSD) are extracellular. A helical transmembrane segment spans residues 118-138 (LIMALHFGFSALSFASVVLLT). His123 lines the heme o pocket. At 139–159 (RLAFEDSNPQKQYAPIVSKAY) the chain is on the cytoplasmic side. A helical membrane pass occupies residues 160 to 180 (KGYVIFVAIYSYVAIYTGAYV). Residues 181–215 (KHTNATLACSGFPLCNGQWVPDVFTEAIGVQLLHR) are Extracellular-facing. A disulfide bridge connects residues Cys189 and Cys195. Position 214 (His214) interacts with heme b. The chain crosses the membrane as a helical span at residues 216 to 236 (SAAILLSLLLLVLFIWTVKTF). Residues 237–240 (RASR) lie on the Cytoplasmic side of the membrane. Residues 241-261 (VLVVCASLAMLLVIGQAASGV) traverse the membrane as a helical segment. Residues 262–274 (AVVLTYNATLTLG) lie on the Extracellular side of the membrane. A helical membrane pass occupies residues 275-295 (IFHALLISLLFTLLCYMVMLV). Position 277 (His277) interacts with heme b. The Cytoplasmic portion of the chain corresponds to 296–301 (TRHKAK).

This sequence belongs to the COX15/CtaA family. Type 1 subfamily. As to quaternary structure, interacts with CtaB. Heme b is required as a cofactor.

Its subcellular location is the cell membrane. The catalysed reaction is Fe(II)-heme o + 2 A + H2O = Fe(II)-heme a + 2 AH2. Its pathway is porphyrin-containing compound metabolism; heme A biosynthesis; heme A from heme O: step 1/1. In terms of biological role, catalyzes the conversion of heme O to heme A by two successive hydroxylations of the methyl group at C8. The first hydroxylation forms heme I, the second hydroxylation results in an unstable dihydroxymethyl group, which spontaneously dehydrates, resulting in the formyl group of heme A. The protein is Heme A synthase of Shouchella clausii (strain KSM-K16) (Alkalihalobacillus clausii).